Consider the following 417-residue polypeptide: Serine hydroxymethyltransferase (417 aa).

(6S)-5,6,7,8-tetrahydrofolate is bound by residues Leu112 and 116–118 (GHL). N6-(pyridoxal phosphate)lysine is present on Lys221. Position 247 (Glu247) interacts with (6S)-5,6,7,8-tetrahydrofolate.

Belongs to the SHMT family. In terms of assembly, homodimer. The cofactor is pyridoxal 5'-phosphate.

Its subcellular location is the cytoplasm. It catalyses the reaction (6R)-5,10-methylene-5,6,7,8-tetrahydrofolate + glycine + H2O = (6S)-5,6,7,8-tetrahydrofolate + L-serine. Its pathway is one-carbon metabolism; tetrahydrofolate interconversion. It functions in the pathway amino-acid biosynthesis; glycine biosynthesis; glycine from L-serine: step 1/1. Functionally, catalyzes the reversible interconversion of serine and glycine with tetrahydrofolate (THF) serving as the one-carbon carrier. This reaction serves as the major source of one-carbon groups required for the biosynthesis of purines, thymidylate, methionine, and other important biomolecules. Also exhibits THF-independent aldolase activity toward beta-hydroxyamino acids, producing glycine and aldehydes, via a retro-aldol mechanism. In Borrelia duttonii (strain Ly), this protein is Serine hydroxymethyltransferase.